The chain runs to 482 residues: MVATTETNVGKIVQIIGPVIDAEFPSGKLPRIYNALTVKGTNSAGQNLSVTCEVQQLLGDNQVRAVAMSTTDGLVRGMDIVDTGAAISVPVGKCTLGRIFNVLGEPVDEKGPVNVTETSPIHRPAPKLVDLEVTPTVFETGIKVIDLLTPYRQGGKIGLFGGAGVGKTVIMMELINNIAIQHGGVSVFGGVGERTREGNDLYNEMIESKVINADNPEDSKIALVYGQMNEPPGARMRVGLSALTMAEYFRDVSKQDVLLFIDNIFRFVQAGSEVSALLGRMPSAVGYQPTLGTDVGDLQERITSTKEGSITSIQAVYVPADDLTDPAPATTFAHLDGTTVLSRGLASKGIYPAVDPLGSTSTMLQADIVGDEHYGTARAVQSTLQRYKELQDIIAILGLDELSEEDRLTVDRARKIERFLSQPFFVAEVFTGSPGKYVTLADTIKGFQMILKGELDSLPEQAFYMVGSIDEAIAKGEKLKKG.

An ATP-binding site is contributed by 161 to 168 (GGAGVGKT).

Belongs to the ATPase alpha/beta chains family. In terms of assembly, F-type ATPases have 2 components, CF(1) - the catalytic core - and CF(0) - the membrane proton channel. CF(1) has five subunits: alpha(3), beta(3), gamma(1), delta(1), epsilon(1). CF(0) has four main subunits: a(1), b(1), b'(1) and c(9-12).

The protein localises to the cellular thylakoid membrane. The enzyme catalyses ATP + H2O + 4 H(+)(in) = ADP + phosphate + 5 H(+)(out). Produces ATP from ADP in the presence of a proton gradient across the membrane. The catalytic sites are hosted primarily by the beta subunits. This chain is ATP synthase subunit beta, found in Microcystis aeruginosa (strain NIES-843 / IAM M-2473).